A 107-amino-acid polypeptide reads, in one-letter code: MSEETLAYIESVIAERRKASPEDSYVSSLFHRGTAHIAQKVGEEAVETVIAALAQDKKSLESEAADLIFHLAVLLADRGSSFENVFSELRRREGVSGHAEKAARPKS.

Belongs to the PRA-PH family.

The protein localises to the cytoplasm. It catalyses the reaction 1-(5-phospho-beta-D-ribosyl)-ATP + H2O = 1-(5-phospho-beta-D-ribosyl)-5'-AMP + diphosphate + H(+). The protein operates within amino-acid biosynthesis; L-histidine biosynthesis; L-histidine from 5-phospho-alpha-D-ribose 1-diphosphate: step 2/9. The protein is Phosphoribosyl-ATP pyrophosphatase of Zymomonas mobilis subsp. mobilis (strain ATCC 31821 / ZM4 / CP4).